Reading from the N-terminus, the 54-residue chain is Ovomucoid (54 aa).

In terms of domain architecture, Kazal-like spans 4-54 (VDCSDYPKPACTLEYMPLCGSDNKTYGNKCNFCNAVVDSNGTLTLSHFGKC). 3 disulfide bridges follow: cysteine 6/cysteine 36, cysteine 14/cysteine 33, and cysteine 22/cysteine 54. Asparagine 43 carries N-linked (GlcNAc...) asparagine glycosylation.

It localises to the secreted. The chain is Ovomucoid from Dendrocygna arcuata (Wandering whistling-duck).